We begin with the raw amino-acid sequence, 481 residues long: ATP synthase subunit beta (481 aa).

ATP is bound at residue 160 to 167 (GGAGVGKT).

This sequence belongs to the ATPase alpha/beta chains family. In terms of assembly, F-type ATPases have 2 components, CF(1) - the catalytic core - and CF(0) - the membrane proton channel. CF(1) has five subunits: alpha(3), beta(3), gamma(1), delta(1), epsilon(1). CF(0) has three main subunits: a(1), b(2) and c(9-12). The alpha and beta chains form an alternating ring which encloses part of the gamma chain. CF(1) is attached to CF(0) by a central stalk formed by the gamma and epsilon chains, while a peripheral stalk is formed by the delta and b chains.

It localises to the cell inner membrane. It carries out the reaction ATP + H2O + 4 H(+)(in) = ADP + phosphate + 5 H(+)(out). In terms of biological role, produces ATP from ADP in the presence of a proton gradient across the membrane. The catalytic sites are hosted primarily by the beta subunits. The sequence is that of ATP synthase subunit beta from Anaeromyxobacter sp. (strain Fw109-5).